The sequence spans 482 residues: Guanine nucleotide exchange factor SRM1 (482 aa).

A compositionally biased stretch (polar residues) spans 1–11 (MVKRTVATNGD). The disordered stretch occupies residues 1–22 (MVKRTVATNGDASGAHRAKKMS). The Nuclear localization signal signature appears at 15–26 (AHRAKKMSKTHA). 7 RCC1 repeats span residues 45–101 (PLDI…ALDE), 103–152 (SNVW…TPAK), 183–238 (NGEV…FLDE), 239–291 (EGMV…ALTK), 292–347 (DNKL…ILSQ), 349–411 (GDLY…AVAQ), and 412–466 (NGIA…SGGV). Residues 128–158 (KDMDADDSSDDEDGDLNELESTPAKIPRESF) form a disordered region. The span at 131–145 (DADDSSDDEDGDLNE) shows a compositional bias: acidic residues. Phosphoserine is present on residues Ser135 and Ser136.

As to quaternary structure, component of a multicomponent complex composed of six to seven proteins, which has a collective molecular mass greater than 150 kDa. Interacts with GSP1 and YRB2. Phosphorylated; possibly by KSP1.

It localises to the nucleus. Functionally, guanine nucleotide exchange factor that promotes the exchange of GSP1/GSP2-bound GDP by GTP and controls RNA metabolism and transport. Involved in yeast pheromone response pathway and in mRNA metabolism. Involved in nuclear pore complex (NPC) assembly and required for mRNA and ribosome nuclear export. Binds chromatin and is involved NPC-mediated transcriptional control. The protein is Guanine nucleotide exchange factor SRM1 (SRM1) of Saccharomyces cerevisiae (strain ATCC 204508 / S288c) (Baker's yeast).